A 188-amino-acid chain; its full sequence is Apolipoprotein M (188 aa).

Residues 1–22 (MFHQIWAALLYFYGIILNSIYQ) constitute a signal peptide (not cleaved). Cystine bridges form between Cys-23-Cys-167, Cys-95-Cys-183, and Cys-128-Cys-157. N-linked (GlcNAc...) asparagine glycosylation occurs at Asn-135. Positions 136 and 143 each coordinate tetradecanoate.

The protein belongs to the calycin superfamily. Lipocalin family. Highly divergent. Interacts with LRP2; LRP2 mediates APOM renal uptake and subsequent lysosomal degradation.

It is found in the secreted. Functionally, probably involved in lipid transport. Can bind sphingosine-1-phosphate, myristic acid, palmitic acid and stearic acid, retinol, all-trans-retinoic acid and 9-cis-retinoic acid. The sequence is that of Apolipoprotein M (APOM) from Pongo abelii (Sumatran orangutan).